Here is a 326-residue protein sequence, read N- to C-terminus: Glyoxylate/hydroxypyruvate reductase B (326 aa).

Catalysis depends on residues arginine 237 and glutamate 266. The Proton donor role is filled by histidine 285.

This sequence belongs to the D-isomer specific 2-hydroxyacid dehydrogenase family. GhrB subfamily. As to quaternary structure, homodimer.

It is found in the cytoplasm. It carries out the reaction glycolate + NADP(+) = glyoxylate + NADPH + H(+). The enzyme catalyses (R)-glycerate + NAD(+) = 3-hydroxypyruvate + NADH + H(+). The catalysed reaction is (R)-glycerate + NADP(+) = 3-hydroxypyruvate + NADPH + H(+). Catalyzes the NADPH-dependent reduction of glyoxylate and hydroxypyruvate into glycolate and glycerate, respectively. This is Glyoxylate/hydroxypyruvate reductase B from Yersinia enterocolitica serotype O:8 / biotype 1B (strain NCTC 13174 / 8081).